We begin with the raw amino-acid sequence, 173 residues long: Adenine phosphoribosyltransferase (173 aa).

Belongs to the purine/pyrimidine phosphoribosyltransferase family. In terms of assembly, homodimer.

It is found in the cytoplasm. The enzyme catalyses AMP + diphosphate = 5-phospho-alpha-D-ribose 1-diphosphate + adenine. It participates in purine metabolism; AMP biosynthesis via salvage pathway; AMP from adenine: step 1/1. Catalyzes a salvage reaction resulting in the formation of AMP, that is energically less costly than de novo synthesis. This Thermoanaerobacter sp. (strain X514) protein is Adenine phosphoribosyltransferase.